The sequence spans 625 residues: Phosphomethylpyrimidine synthase (625 aa).

Substrate contacts are provided by residues Asn230, Met259, Tyr288, His324, 344 to 346, 385 to 388, and Glu424; these read SRG and DGLR. Zn(2+) is bound at residue His428. Substrate is bound at residue Tyr451. His492 is a Zn(2+) binding site. Cys572, Cys575, and Cys580 together coordinate [4Fe-4S] cluster.

It belongs to the ThiC family. In terms of assembly, homodimer. Requires [4Fe-4S] cluster as cofactor.

The catalysed reaction is 5-amino-1-(5-phospho-beta-D-ribosyl)imidazole + S-adenosyl-L-methionine = 4-amino-2-methyl-5-(phosphooxymethyl)pyrimidine + CO + 5'-deoxyadenosine + formate + L-methionine + 3 H(+). The protein operates within cofactor biosynthesis; thiamine diphosphate biosynthesis. Functionally, catalyzes the synthesis of the hydroxymethylpyrimidine phosphate (HMP-P) moiety of thiamine from aminoimidazole ribotide (AIR) in a radical S-adenosyl-L-methionine (SAM)-dependent reaction. In Xanthomonas campestris pv. campestris (strain 8004), this protein is Phosphomethylpyrimidine synthase.